Reading from the N-terminus, the 372-residue chain is Queuine tRNA-ribosyltransferase (372 aa).

Asp92 acts as the Proton acceptor in catalysis. Substrate-binding positions include 92 to 96 (DSGGY), Asp146, Gln188, and Gly215. The segment at 246 to 252 (GIGSLRE) is RNA binding. Residue Asp265 is the Nucleophile of the active site. The segment at 270–274 (TRLGR) is RNA binding; important for wobble base 34 recognition. Positions 303, 305, 308, and 334 each coordinate Zn(2+).

This sequence belongs to the queuine tRNA-ribosyltransferase family. In terms of assembly, homodimer. Within each dimer, one monomer is responsible for RNA recognition and catalysis, while the other monomer binds to the replacement base PreQ1. The cofactor is Zn(2+).

It carries out the reaction 7-aminomethyl-7-carbaguanine + guanosine(34) in tRNA = 7-aminomethyl-7-carbaguanosine(34) in tRNA + guanine. It participates in tRNA modification; tRNA-queuosine biosynthesis. In terms of biological role, catalyzes the base-exchange of a guanine (G) residue with the queuine precursor 7-aminomethyl-7-deazaguanine (PreQ1) at position 34 (anticodon wobble position) in tRNAs with GU(N) anticodons (tRNA-Asp, -Asn, -His and -Tyr). Catalysis occurs through a double-displacement mechanism. The nucleophile active site attacks the C1' of nucleotide 34 to detach the guanine base from the RNA, forming a covalent enzyme-RNA intermediate. The proton acceptor active site deprotonates the incoming PreQ1, allowing a nucleophilic attack on the C1' of the ribose to form the product. After dissociation, two additional enzymatic reactions on the tRNA convert PreQ1 to queuine (Q), resulting in the hypermodified nucleoside queuosine (7-(((4,5-cis-dihydroxy-2-cyclopenten-1-yl)amino)methyl)-7-deazaguanosine). In Prochlorococcus marinus (strain MIT 9215), this protein is Queuine tRNA-ribosyltransferase.